A 244-amino-acid polypeptide reads, in one-letter code: tRNA1(Val) (adenine(37)-N6)-methyltransferase (244 aa).

The protein belongs to the methyltransferase superfamily. tRNA (adenine-N(6)-)-methyltransferase family.

It is found in the cytoplasm. The catalysed reaction is adenosine(37) in tRNA1(Val) + S-adenosyl-L-methionine = N(6)-methyladenosine(37) in tRNA1(Val) + S-adenosyl-L-homocysteine + H(+). Specifically methylates the adenine in position 37 of tRNA(1)(Val) (anticodon cmo5UAC). The protein is tRNA1(Val) (adenine(37)-N6)-methyltransferase of Photorhabdus laumondii subsp. laumondii (strain DSM 15139 / CIP 105565 / TT01) (Photorhabdus luminescens subsp. laumondii).